Consider the following 226-residue polypeptide: Eukaryotic translation initiation factor 3 subunit K (226 aa).

In terms of domain architecture, PCI spans 42–200; that stretch reads YNLDANLSLL…QLIVLPRNEF (159 aa).

Belongs to the eIF-3 subunit K family. In terms of assembly, component of the eukaryotic translation initiation factor 3 (eIF-3) complex.

The protein resides in the cytoplasm. Component of the eukaryotic translation initiation factor 3 (eIF-3) complex, which is involved in protein synthesis of a specialized repertoire of mRNAs and, together with other initiation factors, stimulates binding of mRNA and methionyl-tRNAi to the 40S ribosome. The eIF-3 complex specifically targets and initiates translation of a subset of mRNAs involved in cell proliferation. The sequence is that of Eukaryotic translation initiation factor 3 subunit K (TIF3K1) from Oryza sativa subsp. japonica (Rice).